The following is a 431-amino-acid chain: Adenylosuccinate lyase (431 aa).

N(6)-(1,2-dicarboxyethyl)-AMP contacts are provided by residues 4-5 (RY), 67-69 (RHD), and 93-94 (TS). Residue H141 is the Proton donor/acceptor of the active site. Q212 provides a ligand contact to N(6)-(1,2-dicarboxyethyl)-AMP. The Proton donor/acceptor role is filled by S262. N(6)-(1,2-dicarboxyethyl)-AMP-binding positions include S263, 268 to 270 (KRN), N276, and 307 to 311 (SAERI).

This sequence belongs to the lyase 1 family. Adenylosuccinate lyase subfamily. In terms of assembly, homotetramer. Residues from neighboring subunits contribute catalytic and substrate-binding residues to each active site.

It catalyses the reaction N(6)-(1,2-dicarboxyethyl)-AMP = fumarate + AMP. It carries out the reaction (2S)-2-[5-amino-1-(5-phospho-beta-D-ribosyl)imidazole-4-carboxamido]succinate = 5-amino-1-(5-phospho-beta-D-ribosyl)imidazole-4-carboxamide + fumarate. It participates in purine metabolism; AMP biosynthesis via de novo pathway; AMP from IMP: step 2/2. The protein operates within purine metabolism; IMP biosynthesis via de novo pathway; 5-amino-1-(5-phospho-D-ribosyl)imidazole-4-carboxamide from 5-amino-1-(5-phospho-D-ribosyl)imidazole-4-carboxylate: step 2/2. Functionally, catalyzes two reactions in de novo purine nucleotide biosynthesis. Catalyzes the breakdown of 5-aminoimidazole- (N-succinylocarboxamide) ribotide (SAICAR or 2-[5-amino-1-(5-phospho-beta-D-ribosyl)imidazole-4-carboxamido]succinate) to 5-aminoimidazole-4-carboxamide ribotide (AICAR or 5-amino-1-(5-phospho-beta-D-ribosyl)imidazole-4-carboxamide) and fumarate, and of adenylosuccinate (ADS or N(6)-(1,2-dicarboxyethyl)-AMP) to adenosine monophosphate (AMP) and fumarate. Influences the affinity of glutamyl--tRNA ligase for its substrates and increases its thermostability. This Bacillus subtilis (strain 168) protein is Adenylosuccinate lyase (purB).